Here is a 504-residue protein sequence, read N- to C-terminus: 26S proteasome non-ATPase regulatory subunit 3 (504 aa).

A PCI domain is found at 254–434; the sequence is ARYFYYQGRI…GYLQSRENID (181 aa). The tract at residues 485-504 is disordered; it reads KEEMERQAEESSDNEGDSDF. Residues 494-504 are compositionally biased toward acidic residues; it reads ESSDNEGDSDF.

The protein belongs to the proteasome subunit S3 family. As to quaternary structure, the 26S proteasome is composed of a core protease, known as the 20S proteasome, capped at one or both ends by the 19S regulatory complex (RC). The RC is composed of at least 18 different subunits in two subcomplexes, the base and the lid, which form the portions proximal and distal to the 20S proteolytic core, respectively.

Functionally, acts as a regulatory subunit of the 26 proteasome which is involved in the ATP-dependent degradation of ubiquitinated proteins. This chain is 26S proteasome non-ATPase regulatory subunit 3 (psmD3), found in Dictyostelium discoideum (Social amoeba).